A 282-amino-acid chain; its full sequence is Pantothenate synthetase (282 aa).

26-33 (MGNLHEGH) provides a ligand contact to ATP. The active-site Proton donor is H33. Residue Q57 participates in (R)-pantoate binding. A beta-alanine-binding site is contributed by Q57. Residue 148 to 151 (GKKD) participates in ATP binding. Q154 contributes to the (R)-pantoate binding site. 185–188 (LSSR) contributes to the ATP binding site.

The protein belongs to the pantothenate synthetase family. In terms of assembly, homodimer.

The protein resides in the cytoplasm. It catalyses the reaction (R)-pantoate + beta-alanine + ATP = (R)-pantothenate + AMP + diphosphate + H(+). It participates in cofactor biosynthesis; (R)-pantothenate biosynthesis; (R)-pantothenate from (R)-pantoate and beta-alanine: step 1/1. Its function is as follows. Catalyzes the condensation of pantoate with beta-alanine in an ATP-dependent reaction via a pantoyl-adenylate intermediate. This chain is Pantothenate synthetase, found in Paracidovorax citrulli (strain AAC00-1) (Acidovorax citrulli).